We begin with the raw amino-acid sequence, 307 residues long: Aspartate carbamoyltransferase catalytic subunit (307 aa).

Residues R59 and T60 each coordinate carbamoyl phosphate. K87 serves as a coordination point for L-aspartate. Carbamoyl phosphate is bound by residues R109, H139, and Q142. L-aspartate is bound by residues R172 and R224. The carbamoyl phosphate site is built by A265 and P266.

The protein belongs to the aspartate/ornithine carbamoyltransferase superfamily. ATCase family. In terms of assembly, heterododecamer (2C3:3R2) of six catalytic PyrB chains organized as two trimers (C3), and six regulatory PyrI chains organized as three dimers (R2).

The enzyme catalyses carbamoyl phosphate + L-aspartate = N-carbamoyl-L-aspartate + phosphate + H(+). Its pathway is pyrimidine metabolism; UMP biosynthesis via de novo pathway; (S)-dihydroorotate from bicarbonate: step 2/3. In terms of biological role, catalyzes the condensation of carbamoyl phosphate and aspartate to form carbamoyl aspartate and inorganic phosphate, the committed step in the de novo pyrimidine nucleotide biosynthesis pathway. This is Aspartate carbamoyltransferase catalytic subunit from Streptococcus agalactiae serotype Ia (strain ATCC 27591 / A909 / CDC SS700).